A 182-amino-acid chain; its full sequence is Pyruvate synthase subunit PorC (182 aa).

In terms of assembly, heterotetramer of one alpha, one beta, one delta and one gamma chain.

The enzyme catalyses 2 oxidized [2Fe-2S]-[ferredoxin] + pyruvate + CoA = 2 reduced [2Fe-2S]-[ferredoxin] + acetyl-CoA + CO2 + H(+). The sequence is that of Pyruvate synthase subunit PorC (porC) from Methanosarcina barkeri (strain Fusaro / DSM 804).